Here is a 261-residue protein sequence, read N- to C-terminus: Na(+)-translocating NADH-quinone reductase subunit C (261 aa).

A helical transmembrane segment spans residues 12 to 32; that stretch reads LGVVVGLSLVCSIIVSTAAVG. Residue T229 is modified to FMN phosphoryl threonine.

As to quaternary structure, composed of six subunits; NqrA, NqrB, NqrC, NqrD, NqrE and NqrF. FMN serves as cofactor.

Its subcellular location is the cell inner membrane. It catalyses the reaction a ubiquinone + n Na(+)(in) + NADH + H(+) = a ubiquinol + n Na(+)(out) + NAD(+). In terms of biological role, NQR complex catalyzes the reduction of ubiquinone-1 to ubiquinol by two successive reactions, coupled with the transport of Na(+) ions from the cytoplasm to the periplasm. NqrA to NqrE are probably involved in the second step, the conversion of ubisemiquinone to ubiquinol. In Vibrio campbellii (strain ATCC BAA-1116), this protein is Na(+)-translocating NADH-quinone reductase subunit C.